The primary structure comprises 291 residues: Phytanoyl-CoA dioxygenase domain-containing protein 1 (291 aa).

The residue at position 55 (Thr-55) is a Phosphothreonine. Residues Lys-102, Met-141, 156–158, and Trp-174 contribute to the 2-oxoglutarate site; that span reads HQD. Residues His-156 and Asp-158 each coordinate Fe cation. Fe cation is bound at residue His-246. The 2-oxoglutarate site is built by Ser-248 and Arg-257.

It belongs to the PhyH family. PHYHD1 subfamily. Requires Fe cation as cofactor.

Its function is as follows. 2-oxoglutarate(2OG)-dependent dioxygenase that catalyzes the conversion of 2-oxoglutarate to succinate and CO(2) in an iron-dependent manner. However, does not couple 2OG turnover to the hydroxylation of acyl-coenzyme A derivatives, implying that it is not directly involved in phytanoyl coenzyme-A metabolism. Does not show detectable activity towards fatty acid CoA thioesters. This chain is Phytanoyl-CoA dioxygenase domain-containing protein 1 (PHYHD1), found in Bos taurus (Bovine).